The following is an 86-amino-acid chain: Acyl-CoA-binding protein homolog (86 aa).

The region spanning 2–86 (VSEQFNAAAE…FVEGLVAKYA (85 aa)) is the ACB domain. An acyl-CoA is bound by residues lysine 14, 29-33 (YALFK), lysine 51, lysine 55, and tyrosine 74.

It belongs to the ACBP family. Expressed in larval and pupal brains. In adults, expressed in cardia, part of the Malpighian tubules, fat body, and gametes of both sexes.

Its function is as follows. Binds medium- and long-chain acyl-CoA esters with very high affinity and may function as an intracellular carrier of acyl-CoA esters. May be involved in energy metabolism in a manner that depends on the substrate used for energy production. Dbi and its metabolites are involved in the regulation of multiple biological processes. This chain is Acyl-CoA-binding protein homolog, found in Drosophila melanogaster (Fruit fly).